The chain runs to 184 residues: ATP synthase subunit delta (184 aa).

The protein belongs to the ATPase delta chain family. F-type ATPases have 2 components, F(1) - the catalytic core - and F(0) - the membrane proton channel. F(1) has five subunits: alpha(3), beta(3), gamma(1), delta(1), epsilon(1). F(0) has three main subunits: a(1), b(2) and c(10-14). The alpha and beta chains form an alternating ring which encloses part of the gamma chain. F(1) is attached to F(0) by a central stalk formed by the gamma and epsilon chains, while a peripheral stalk is formed by the delta and b chains.

The protein localises to the cell inner membrane. Its function is as follows. F(1)F(0) ATP synthase produces ATP from ADP in the presence of a proton or sodium gradient. F-type ATPases consist of two structural domains, F(1) containing the extramembraneous catalytic core and F(0) containing the membrane proton channel, linked together by a central stalk and a peripheral stalk. During catalysis, ATP synthesis in the catalytic domain of F(1) is coupled via a rotary mechanism of the central stalk subunits to proton translocation. Functionally, this protein is part of the stalk that links CF(0) to CF(1). It either transmits conformational changes from CF(0) to CF(1) or is implicated in proton conduction. This is ATP synthase subunit delta from Rickettsia conorii (strain ATCC VR-613 / Malish 7).